The following is an 836-amino-acid chain: Exonuclease 1 (836 aa).

The N-domain stretch occupies residues 1 to 99 (MGIQGLLPQL…TKRERSRKEN (99 aa)). The Mg(2+) site is built by Asp-30 and Asp-78. Positions 82-108 (LPMKGDQETKRERSRKENLERAKEHES) are disordered. The span at 84 to 108 (MKGDQETKRERSRKENLERAKEHES) shows a compositional bias: basic and acidic residues. Residues 138-230 (KQEKVDYIVA…ILSGCDYLPS (93 aa)) are I-domain. Positions 150, 152, 171, 173, and 226 each coordinate Mg(2+). Disordered stretches follow at residues 464 to 488 (RDDS…DPDI), 568 to 641 (EDEC…TNSE), and 744 to 836 (TASA…TSRS). Residues 568–577 (EDECHDEDNC) are compositionally biased toward acidic residues. 2 stretches are compositionally biased toward polar residues: residues 578 to 592 (ETGN…QRSS) and 744 to 758 (TASA…TSKA).

The protein belongs to the XPG/RAD2 endonuclease family. EXO1 subfamily. The cofactor is Mg(2+).

The protein resides in the nucleus. Its function is as follows. Putative 5'-&gt;3' double-stranded DNA exonuclease which may also contain a cryptic 3'-&gt;5' double-stranded DNA exonuclease activity. May be involved in DNA mismatch repair (MMR). This Oryza sativa subsp. japonica (Rice) protein is Exonuclease 1 (EXO1).